The chain runs to 721 residues: Penicillin-binding protein activator LpoA (721 aa).

The signal sequence occupies residues 1–26 (MVPLTFLRTKASRSLPIMLAALIFAG). The N-palmitoyl cysteine moiety is linked to residue cysteine 27. Cysteine 27 is lipidated: S-diacylglycerol cysteine. Residues 316–330 (TSDLTSAQAPAQGTM) show a composition bias toward polar residues. A disordered region spans residues 316 to 393 (TSDLTSAQAP…PAAQPQAVAA (78 aa)). A compositionally biased stretch (low complexity) spans 331–393 (QNPVTAPTTP…PAAQPQAVAA (63 aa)).

The protein belongs to the LpoA family. As to quaternary structure, interacts with PBP1a.

It localises to the cell outer membrane. Regulator of peptidoglycan synthesis that is essential for the function of penicillin-binding protein 1A (PBP1a). The protein is Penicillin-binding protein activator LpoA of Enterobacter sp. (strain 638).